The primary structure comprises 401 residues: Rho-N domain-containing protein 1, chloroplastic (401 aa).

A chloroplast-targeting transit peptide spans 1 to 63; it reads MAMSGTFHLT…VPNRSSFVCR (63 aa). Disordered regions lie at residues 73–129 and 180–361; these read PDFS…PGPR and KHSG…EEAV. Polar residues-rich tracts occupy residues 102 to 126, 210 to 223, and 240 to 265; these read DMLS…TSSP, TGNL…DNNA, and PRSQ…VTWT. Positions 266-290 are enriched in basic and acidic residues; it reads QKKDTVELHDEPEHEPAYEHEHEPE. Positions 339–358 are enriched in acidic residues; that stretch reads LSDDDESLDDADEDSDEAEE. Residues 339 to 371 adopt a coiled-coil conformation; that stretch reads LSDDDESLDDADEDSDEAEEEAVKDLSELKLVE.

As to quaternary structure, homodimer or homomultimer. Part of a chloroplastic degradosome-like complex. Interacts with RNE.

It is found in the plastid. The protein resides in the chloroplast. Functionally, binds to and supports processing of specific plastid RNAs. Associates via its C-terminal Rho-N domain to single stranded regions of 16S and 23S rRNAs or to rbcL mRNAs. May be involved in targeting transcripts to RNases such as RNE or RNase J. This Arabidopsis thaliana (Mouse-ear cress) protein is Rho-N domain-containing protein 1, chloroplastic (RHON1).